The following is a 367-amino-acid chain: Anhydro-N-acetylmuramic acid kinase (367 aa).

11–18 contacts ATP; that stretch reads GTSLDGVD.

Belongs to the anhydro-N-acetylmuramic acid kinase family.

It catalyses the reaction 1,6-anhydro-N-acetyl-beta-muramate + ATP + H2O = N-acetyl-D-muramate 6-phosphate + ADP + H(+). The protein operates within amino-sugar metabolism; 1,6-anhydro-N-acetylmuramate degradation. It functions in the pathway cell wall biogenesis; peptidoglycan recycling. Its function is as follows. Catalyzes the specific phosphorylation of 1,6-anhydro-N-acetylmuramic acid (anhMurNAc) with the simultaneous cleavage of the 1,6-anhydro ring, generating MurNAc-6-P. Is required for the utilization of anhMurNAc either imported from the medium or derived from its own cell wall murein, and thus plays a role in cell wall recycling. In Bradyrhizobium diazoefficiens (strain JCM 10833 / BCRC 13528 / IAM 13628 / NBRC 14792 / USDA 110), this protein is Anhydro-N-acetylmuramic acid kinase.